A 359-amino-acid chain; its full sequence is Molybdenum import ATP-binding protein ModC (359 aa).

The ABC transporter domain maps to 1 to 229; it reads MLELNFSQQL…SALRPWLQRE (229 aa). Residue 31-38 coordinates ATP; it reads GLSGAGKT. Residues 289–354 enclose the Mop domain; that stretch reads SSSIRNILPV…IKSVSFNRQN (66 aa).

It belongs to the ABC transporter superfamily. Molybdate importer (TC 3.A.1.8) family. The complex is composed of two ATP-binding proteins (ModC), two transmembrane proteins (ModB) and a solute-binding protein (ModA).

The protein resides in the cell inner membrane. It catalyses the reaction molybdate(out) + ATP + H2O = molybdate(in) + ADP + phosphate + H(+). Its function is as follows. Part of the ABC transporter complex ModABC involved in molybdenum import. Responsible for energy coupling to the transport system. The protein is Molybdenum import ATP-binding protein ModC of Yersinia pestis bv. Antiqua (strain Antiqua).